Here is a 764-residue protein sequence, read N- to C-terminus: MTIIHNLGFPRIGAQRELKRAVEAYWAGRQTAEALHETGRALRAAHWQRQADAGVAFVPVGDFAWYDHILEWTTLLGAVPARFGHPEGKPVDLDTLFRMGRGRAPSGKPAAACEMTKWFDTNYHYIVPELTPGQTFRVAREDLFEQVKEAQALGHRVKPVIPGPLTWLWLGKGDAFAQGAGDIGKLQLLDALLPVYGEVLERLAGLGVEWVQIDEPALVLDLPQAWRDAYQAVYAKLAASPVKLLLATYFDGLKDNLATALALPVAGLHVDLVRAPDQLSDVASGLRPGQVLSAGVINGRNIWRTDLDAALAMLVPVREQLQERLWLAPSCSLLHVPVDLAGETELDAELLGWLSFAVQKLDELCLLGKALGGDADPAVQQGLAAQRAALQARRQSPRIHNPAVAQRMAGQAGVSRERAPFGQRIARQQSELRLPAFPTTTIGSFPQTAEIRALRRDWKSGALTDSAYENAIRKEIEEVIRFQEKVGLDVLVHGEPERNDMVEYFGELLAGFAFTKNGWVQSYGSRCVKPPIIFGDVARPAPMTVGWSAYAQSLTDKPVKGMLTGPVTILQWSFVRDDQPREATCRQLALALRDEVVDLEAAGIRVIQIDEPAIREGLPLRRADWRAYLDWAVDCFRLSTAGVGEATQIHTHMCYSEFNDIIESIAAMDADVITIETSRSNMELLKAFEDFHYPNDIGPGVYDIHSPNVPEVDWMVELMRKAAARLPKERLWVNPDCGLKTRAWPETEAALIGMVQAARTLRAA.

5-methyltetrahydropteroyltri-L-glutamate contacts are provided by residues 16–19 (RELK) and Lys117. Residues 442–444 (IGS) and Glu495 contribute to the L-homocysteine site. Residues 442–444 (IGS) and Glu495 each bind L-methionine. Residues 526-527 (RC) and Trp572 each bind 5-methyltetrahydropteroyltri-L-glutamate. Residue Asp610 participates in L-homocysteine binding. Position 610 (Asp610) interacts with L-methionine. Glu616 provides a ligand contact to 5-methyltetrahydropteroyltri-L-glutamate. Residues His652, Cys654, and Glu676 each contribute to the Zn(2+) site. The active-site Proton donor is the His705. Zn(2+) is bound at residue Cys737.

This sequence belongs to the vitamin-B12 independent methionine synthase family. Zn(2+) serves as cofactor.

It carries out the reaction 5-methyltetrahydropteroyltri-L-glutamate + L-homocysteine = tetrahydropteroyltri-L-glutamate + L-methionine. It participates in amino-acid biosynthesis; L-methionine biosynthesis via de novo pathway; L-methionine from L-homocysteine (MetE route): step 1/1. In terms of biological role, catalyzes the transfer of a methyl group from 5-methyltetrahydrofolate to homocysteine resulting in methionine formation. This is 5-methyltetrahydropteroyltriglutamate--homocysteine methyltransferase from Bordetella pertussis (strain Tohama I / ATCC BAA-589 / NCTC 13251).